A 462-amino-acid polypeptide reads, in one-letter code: Malonyl-coenzyme:anthocyanin 5-O-glucoside-6'''-O-malonyltransferase (462 aa).

Active-site proton acceptor residues include H167 and D390.

The protein belongs to the plant acyltransferase family. As to expression, detected in petals and sepals, and at lower levels in bracts and red stems.

It catalyses the reaction pelargonidin 3-O-(6-O-[(E)-caffeoyl]-beta-D-glucoside) 5-O-beta-D-glucoside + malonyl-CoA = 4'''-demalonylsalvianin + CoA. It functions in the pathway pigment biosynthesis; anthocyanin biosynthesis. Its activity is regulated as follows. Completely inhibited by 10 mM p-coumaric acid, this inhibition is rapid, reversible and non-competitive. Completely inhibited by 0.1 mM Cu(2+), 0.1 mM Hg(2+) and 10 mM caffeic acid. Partially inhibited by 5 mM N-ethylmaleimide, 1 mM diethylpyrocarbonate and 1 mM acetyl-CoA. Catalyzes the transfer of a malonyl group from malonyl-CoA to the 6'''-hydroxyl group of the 5-glucosyl moiety of anthocyanins. Active towards bisdemalonylsalvianin (pelargonidin 3-O-(6-caffeoyl-beta-D-glucoside) 5-O-beta-D-glucoside) and shisonin, but not towards nodemalonylsalvianin, salvianin, pelargonidin 3,5-diglucoside and delphinidin 3,5-diglucoside. The chain is Malonyl-coenzyme:anthocyanin 5-O-glucoside-6'''-O-malonyltransferase from Salvia splendens (Scarlet sage).